The following is a 248-amino-acid chain: Glutaredoxin domain-containing cysteine-rich protein 2 (248 aa).

Composition is skewed to basic and acidic residues over residues methionine 1 to proline 16 and leucine 157 to arginine 172. 2 disordered regions span residues methionine 1 to arginine 20 and glutamate 150 to arginine 172.

The protein belongs to the GRXCR2 family. As to quaternary structure, interacts with TPRN; the interaction restricts TPRN to the stereocilum basal region.

Its subcellular location is the cell projection. The protein localises to the stereocilium. Required for hearing. Plays a role in maintaining cochlear stereocilia bundles that are involved in sound detection. Ensures the restriction of TPRN to the basal region of stereocilia in hair cells. This is Glutaredoxin domain-containing cysteine-rich protein 2 (GRXCR2) from Homo sapiens (Human).